Here is a 152-residue protein sequence, read N- to C-terminus: Large ribosomal subunit protein uL15 (152 aa).

The span at Met-1–Thr-12 shows a compositional bias: polar residues. Positions Met-1–Met-57 are disordered. Positions Ser-14 to Arg-23 are enriched in basic residues. A compositionally biased stretch (gly residues) spans Ile-25–Met-37.

This sequence belongs to the universal ribosomal protein uL15 family. Part of the 50S ribosomal subunit.

In terms of biological role, binds to the 23S rRNA. This is Large ribosomal subunit protein uL15 from Prochlorococcus marinus subsp. pastoris (strain CCMP1986 / NIES-2087 / MED4).